Here is a 580-residue protein sequence, read N- to C-terminus: Multidrug resistance-like ATP-binding protein MdlB (580 aa).

Residues L25–Q310 enclose the ABC transmembrane type-1 domain. 6 consecutive transmembrane segments (helical) span residues I26–I46, L61–L81, I150–V170, F173–L193, L247–F267, and M268–I288. The region spanning I341 to F575 is the ABC transporter domain. Residue G375–S382 coordinates ATP.

It belongs to the ABC transporter superfamily. Drug exporter-2 (TC 3.A.1.117) family.

Its subcellular location is the cell membrane. It catalyses the reaction ATP + H2O + xenobioticSide 1 = ADP + phosphate + xenobioticSide 2.. The sequence is that of Multidrug resistance-like ATP-binding protein MdlB (mdlB) from Buchnera aphidicola subsp. Acyrthosiphon pisum (strain APS) (Acyrthosiphon pisum symbiotic bacterium).